A 930-amino-acid chain; its full sequence is Protein translocase subunit SecA (930 aa).

ATP-binding positions include glutamine 83, glycine 101–threonine 105, and aspartate 491.

Belongs to the SecA family. In terms of assembly, monomer and homodimer. Part of the essential Sec protein translocation apparatus which comprises SecA, SecYEG and auxiliary proteins SecDF. Other proteins may also be involved.

The protein localises to the cell inner membrane. It is found in the cellular thylakoid membrane. Its subcellular location is the cytoplasm. The enzyme catalyses ATP + H2O + cellular proteinSide 1 = ADP + phosphate + cellular proteinSide 2.. In terms of biological role, part of the Sec protein translocase complex. Interacts with the SecYEG preprotein conducting channel. Has a central role in coupling the hydrolysis of ATP to the transfer of proteins into and across the cell membrane, serving as an ATP-driven molecular motor driving the stepwise translocation of polypeptide chains across the membrane. Functionally, probably participates in protein translocation into and across both the cytoplasmic and thylakoid membranes in cyanobacterial cells. In Trichormus variabilis (strain ATCC 29413 / PCC 7937) (Anabaena variabilis), this protein is Protein translocase subunit SecA.